A 588-amino-acid chain; its full sequence is DELLA protein GAI (588 aa).

The span at 1-15 (MKRDRDRDREREKRA) shows a compositional bias: basic and acidic residues. The tract at residues 1 to 38 (MKRDRDRDREREKRAFSNGAVSSGKSKIWEEDEEEKPD) is disordered. The DELLA motif signature appears at 42-46 (DELLA). Positions 152–177 (GAVFNSDSNKRHRSTTSSFSTTSSSM) are disordered. A compositionally biased stretch (low complexity) spans 166 to 177 (TTSSFSTTSSSM). A GRAS domain is found at 190–574 (VDSQETGVRL…RPLIATSAWK (385 aa)). The tract at residues 197–251 (VRLVHTLMACAEAVQQENLTLADQLVRHIGILAVSQSGAMRKVATYFAEALARRI) is leucine repeat I (LRI). The segment at 269 to 334 (QMHFYETCPY…GGPPAFRLTG (66 aa)) is VHIID. The short motif at 300–304 (VHVID) is the VHIID element. The segment at 348-380 (QVGWKLAQLAETIGVEFEFRGFVANSLADLDAT) is leucine repeat II (LRII). The tract at residues 392-495 (VAINSVFELH…EVYLGRQICN (104 aa)) is PFYRE. An LXXLL motif motif is present at residues 400–404 (LHRLL). The tract at residues 498–574 (ACEGSDRVER…RPLIATSAWK (77 aa)) is SAW.

It belongs to the GRAS family. DELLA subfamily. Post-translationally, phosphorylated. Ubiquitinated. Upon GA application it is ubiquitinated, leading to its subsequent degradation. As to expression, expressed in both vegetative and reproductive tissues.

It localises to the nucleus. In terms of biological role, probable transcriptional regulator that acts as a repressor of the gibberellin (GA) signaling pathway. Probably acts by participating in large multiprotein complexes that repress transcription of GA-inducible genes. Upon GA application, it is degraded by the proteasome, allowing the GA signaling pathway. Its degradation is not essential for germination. In Solanum lycopersicum (Tomato), this protein is DELLA protein GAI (GAI).